The chain runs to 1144 residues: Nitric oxide synthase, inducible (1144 aa).

Positions 23–27 match the DINNN-motif; mediates interaction with SPSB1, SPSB2 and SPSB4 motif; the sequence is DINNN. The tract at residues 37–59 is disordered; the sequence is SPTIQDDPKSHQNGSPQLLTGTA. The span at 47-59 shows a compositional bias: polar residues; sequence HQNGSPQLLTGTA. Zn(2+) contacts are provided by Cys104 and Cys109. Ser112 contributes to the (6R)-L-erythro-5,6,7,8-tetrahydrobiopterin binding site. Cys194 is a heme b binding site. The L-arginine site is built by Gln257, Trp366, Tyr367, and Glu371. Residues Arg375, Ile456, Trp457, and Phe470 each contribute to the (6R)-L-erythro-5,6,7,8-tetrahydrobiopterin site. Residue Tyr485 participates in heme b binding. The calmodulin-binding stretch occupies residues 509 to 529; it reads FRVLVKVVFFASMLMRKVMAS. Residues 533-671 form the Flavodoxin-like domain; that stretch reads ATVLFATETG…AFRSWAVQTF (139 aa). Positions 539, 540, 541, 543, and 544 each coordinate FMN. A Phosphotyrosine modification is found at Tyr569. 6 residues coordinate FMN: Ser585, Thr586, Ser622, Cys629, Glu655, and Gln659. An FAD-binding FR-type domain is found at 724 to 964; sequence KNVFTMRLKS…VRSVSGFQLP (241 aa). Arg744 lines the NADP(+) pocket. His766, Arg900, Tyr902, Ser903, Thr918, and Ala920 together coordinate FAD. Thr923 contributes to the NADP(+) binding site. 4 residues coordinate FAD: Tyr924, Val937, Cys938, and Ser939. NADP(+)-binding residues include Thr978, Arg1011, Ser1040, Arg1041, Lys1047, Tyr1049, Gln1051, and Asp1084.

It belongs to the NOS family. In terms of assembly, homodimer. Interacts with NHERF1. Interacts with GAPDH. Interacts with S100A8 and S100A9 to form the iNOS-S100A8/9 transnitrosylase complex. Interacts with SPSB1, SPSB2 and SPSB4. Interacts with ELOC and CUL5 in the presence of SPSB1 or SPSB2 or SPSB4. Forms a complex with ASL, ASS1 and HSP90AA1; the complex regulates cell-autonomous L-arginine synthesis and citrulline recycling while channeling extracellular L-arginine to nitric oxide synthesis pathway. It depends on heme b as a cofactor. Requires FAD as cofactor. The cofactor is FMN. (6R)-L-erythro-5,6,7,8-tetrahydrobiopterin serves as cofactor. Post-translationally, polyubiquitinated; mediated by SPSB1, SPSB2 and SPSB4, leading to proteasomal degradation. Macrophages.

The protein localises to the cytoplasm. It is found in the cytosol. The enzyme catalyses 2 L-arginine + 3 NADPH + 4 O2 + H(+) = 2 L-citrulline + 2 nitric oxide + 3 NADP(+) + 4 H2O. Its activity is regulated as follows. Not stimulated by calcium/calmodulin. Aspirin inhibits expression and function of this enzyme and effects may be exerted at the level of translational/post-translational modification and directly on the catalytic activity. Produces nitric oxide (NO) which is a messenger molecule with diverse functions throughout the body. In macrophages, NO mediates tumoricidal and bactericidal actions. Also has nitrosylase activity and mediates cysteine S-nitrosylation of cytoplasmic target proteins such PTGS2/COX2. As component of the iNOS-S100A8/9 transnitrosylase complex involved in the selective inflammatory stimulus-dependent S-nitrosylation of GAPDH implicated in regulation of the GAIT complex activity and probably multiple targets including ANXA5, EZR, MSN and VIM. Involved in inflammation, enhances the synthesis of pro-inflammatory mediators such as IL6 and IL8. This Mus musculus (Mouse) protein is Nitric oxide synthase, inducible (Nos2).